The sequence spans 88 residues: Small ribosomal subunit protein uS15c (88 aa).

The protein belongs to the universal ribosomal protein uS15 family. In terms of assembly, part of the 30S ribosomal subunit.

It localises to the plastid. It is found in the chloroplast. The protein is Small ribosomal subunit protein uS15c (rps15) of Nasturtium officinale (Watercress).